The following is a 613-amino-acid chain: Transcription factor cbf11 (613 aa).

A disordered region spans residues 32–58 (NNGLHNQEDGAGGRNENSERVGSGSPG).

It belongs to the Su(H) family.

The protein localises to the cytoplasm. It is found in the nucleus. Its function is as follows. Transcription factor that behaves as a negative regulator of adhesion. Recognizes specifically the canonical CSL response element GTGA/GGAA. May also play a cbf12-antagonistic role in the regulation of a number of other important processes such as extracellular material production, colony morphogenesis, ploidy maintenance, or meiosis. The protein is Transcription factor cbf11 (cbf11) of Schizosaccharomyces pombe (strain 972 / ATCC 24843) (Fission yeast).